The following is a 350-amino-acid chain: Dihydroorotase (350 aa).

Zn(2+) is bound by residues histidine 17 and histidine 19. Substrate-binding positions include 19 to 21 and asparagine 45; that span reads HLR. Residues lysine 103, histidine 140, and histidine 178 each coordinate Zn(2+). Residue lysine 103 is modified to N6-carboxylysine. Substrate is bound at residue histidine 140. Leucine 224 is a binding site for substrate. Aspartate 252 contacts Zn(2+). Residue aspartate 252 is part of the active site. Substrate is bound by residues histidine 256 and alanine 268.

The protein belongs to the metallo-dependent hydrolases superfamily. DHOase family. Class II DHOase subfamily. As to quaternary structure, homodimer. Requires Zn(2+) as cofactor.

It catalyses the reaction (S)-dihydroorotate + H2O = N-carbamoyl-L-aspartate + H(+). Its pathway is pyrimidine metabolism; UMP biosynthesis via de novo pathway; (S)-dihydroorotate from bicarbonate: step 3/3. Catalyzes the reversible cyclization of carbamoyl aspartate to dihydroorotate. In Buchnera aphidicola subsp. Acyrthosiphon pisum (strain APS) (Acyrthosiphon pisum symbiotic bacterium), this protein is Dihydroorotase.